We begin with the raw amino-acid sequence, 682 residues long: Pesticidal crystal protein Cry19Ba (682 aa).

Belongs to the delta endotoxin family.

In terms of biological role, promotes colloidosmotic lysis by binding to the midgut epithelial cells of mosquitos. Has larvicidal activity against Culex pipiens molestus, but not to Anopheles stephensi. This chain is Pesticidal crystal protein Cry19Ba, found in Bacillus thuringiensis subsp. higo.